The chain runs to 357 residues: UPF0283 membrane protein BOV_0999 (357 aa).

The tract at residues 1 to 36 (MSDKTPRKPTAFRLEQPARVSAASEQEEPRRPRAVK) is disordered. Basic and acidic residues predominate over residues 27-36 (EEPRRPRAVK). A run of 2 helical transmembrane segments spans residues 78 to 98 (ILFGALGILVSFAIGIWTEDL) and 109 to 129 (LGWTALGVAMVALAAFAAIIL).

Belongs to the UPF0283 family.

It is found in the cell inner membrane. This is UPF0283 membrane protein BOV_0999 from Brucella ovis (strain ATCC 25840 / 63/290 / NCTC 10512).